We begin with the raw amino-acid sequence, 375 residues long: Serpin B5 (375 aa).

N-linked (GlcNAc...) asparagine glycans are attached at residues N133, N298, and N361.

This sequence belongs to the serpin family. Ov-serpin subfamily. In terms of assembly, interacts with IRF6.

It is found in the secreted. The protein localises to the extracellular space. Functionally, tumor suppressor. It blocks the growth, invasion, and metastatic properties of mammary tumors. As it does not undergo the S (stressed) to R (relaxed) conformational transition characteristic of active serpins, it exhibits no serine protease inhibitory activity. The protein is Serpin B5 (Serpinb5) of Mus musculus (Mouse).